The sequence spans 2288 residues: Protein Ycf2 (2288 aa).

1629–1636 is a binding site for ATP; the sequence is GSIGTGRS.

Belongs to the Ycf2 family.

It localises to the plastid. It is found in the chloroplast stroma. Probable ATPase of unknown function. Its presence in a non-photosynthetic plant (Epifagus virginiana) and experiments in tobacco indicate that it has an essential function which is probably not related to photosynthesis. The polypeptide is Protein Ycf2 (Phaseolus vulgaris (Kidney bean)).